We begin with the raw amino-acid sequence, 314 residues long: tRNA pseudouridine synthase B (314 aa).

Asp-47 functions as the Nucleophile in the catalytic mechanism.

This sequence belongs to the pseudouridine synthase TruB family. Type 1 subfamily.

It carries out the reaction uridine(55) in tRNA = pseudouridine(55) in tRNA. Responsible for synthesis of pseudouridine from uracil-55 in the psi GC loop of transfer RNAs. The polypeptide is tRNA pseudouridine synthase B (Vibrio parahaemolyticus serotype O3:K6 (strain RIMD 2210633)).